A 636-amino-acid chain; its full sequence is Bifunctional phosphonoacetaldehyde hydrolase/aminoethylphosphonate transaminase (636 aa).

Positions 1–276 (MKKIYGEKIK…IKSDFVPEND (276 aa)) are phosphonoacetaldehyde hydrolase. The active-site Nucleophile is Asp-15. Positions 15 and 17 each coordinate Mg(2+). Lys-56 serves as the catalytic Schiff-base intermediate with substrate. Asp-189 is a binding site for Mg(2+). The 2-aminoethylphosphonate--pyruvate transaminase stretch occupies residues 277 to 636 (YILLTPGPLS…ADVIEKFINR (360 aa)). Lys-465 bears the N6-(pyridoxal phosphate)lysine mark.

In the N-terminal section; belongs to the HAD-like hydrolase superfamily. PhnX family. This sequence in the C-terminal section; belongs to the class-V pyridoxal-phosphate-dependent aminotransferase family. PhnW subfamily. Homodimer. Requires Mg(2+) as cofactor. It depends on pyridoxal 5'-phosphate as a cofactor.

It carries out the reaction (2-aminoethyl)phosphonate + pyruvate = phosphonoacetaldehyde + L-alanine. The catalysed reaction is phosphonoacetaldehyde + H2O = acetaldehyde + phosphate + H(+). In terms of biological role, involved in phosphonate degradation. This chain is Bifunctional phosphonoacetaldehyde hydrolase/aminoethylphosphonate transaminase (phnXW), found in Clostridioides difficile (strain 630) (Peptoclostridium difficile).